Here is a 133-residue protein sequence, read N- to C-terminus: Ribonuclease P protein component (133 aa).

Belongs to the RnpA family. As to quaternary structure, consists of a catalytic RNA component (M1 or rnpB) and a protein subunit.

The enzyme catalyses Endonucleolytic cleavage of RNA, removing 5'-extranucleotides from tRNA precursor.. In terms of biological role, RNaseP catalyzes the removal of the 5'-leader sequence from pre-tRNA to produce the mature 5'-terminus. It can also cleave other RNA substrates such as 4.5S RNA. The protein component plays an auxiliary but essential role in vivo by binding to the 5'-leader sequence and broadening the substrate specificity of the ribozyme. This chain is Ribonuclease P protein component, found in Pseudomonas entomophila (strain L48).